The sequence spans 137 residues: Putative pre-16S rRNA nuclease (137 aa).

It belongs to the YqgF nuclease family.

The protein localises to the cytoplasm. Functionally, could be a nuclease involved in processing of the 5'-end of pre-16S rRNA. This is Putative pre-16S rRNA nuclease from Clostridium botulinum (strain 657 / Type Ba4).